The primary structure comprises 424 residues: Histidine--tRNA ligase (424 aa).

Belongs to the class-II aminoacyl-tRNA synthetase family. Homodimer.

It is found in the cytoplasm. The catalysed reaction is tRNA(His) + L-histidine + ATP = L-histidyl-tRNA(His) + AMP + diphosphate + H(+). In Pediococcus pentosaceus (strain ATCC 25745 / CCUG 21536 / LMG 10740 / 183-1w), this protein is Histidine--tRNA ligase.